A 298-amino-acid chain; its full sequence is Succinate dehydrogenase [ubiquinone] iron-sulfur subunit, mitochondrial (298 aa).

In terms of domain architecture, 2Fe-2S ferredoxin-type spans 59–147 (YRFNPEAPGA…STKIYPLPHM (89 aa)). [2Fe-2S] cluster is bound by residues Cys107, Cys112, Cys115, and Cys127. Residues 190-220 (ERDRLDGLYECILCACCSTSCPSYWWNADKY) form the 4Fe-4S ferredoxin-type domain. 3 residues coordinate [4Fe-4S] cluster: Cys200, Cys203, and Cys206. Cys210 is a [3Fe-4S] cluster binding site. An a ubiquinone-binding site is contributed by Trp215. [3Fe-4S] cluster contacts are provided by Cys257 and Cys263. Cys267 contacts [4Fe-4S] cluster.

The protein belongs to the succinate dehydrogenase/fumarate reductase iron-sulfur protein family. As to quaternary structure, component of complex II composed of four subunits: a flavoprotein (FP), an iron-sulfur protein (IP), and a cytochrome b composed of a large and a small subunit. The cofactor is [2Fe-2S] cluster. It depends on [3Fe-4S] cluster as a cofactor. Requires [4Fe-4S] cluster as cofactor.

Its subcellular location is the mitochondrion inner membrane. It carries out the reaction a quinone + succinate = fumarate + a quinol. Its pathway is carbohydrate metabolism; tricarboxylic acid cycle; fumarate from succinate (eukaryal route): step 1/1. In terms of biological role, iron-sulfur protein (IP) subunit of succinate dehydrogenase (SDH) that is involved in complex II of the mitochondrial electron transport chain and is responsible for transferring electrons from succinate to ubiquinone (coenzyme Q). In Caenorhabditis elegans, this protein is Succinate dehydrogenase [ubiquinone] iron-sulfur subunit, mitochondrial (sdhb-1).